The primary structure comprises 331 residues: Ketol-acid reductoisomerase (NADP(+)) (331 aa).

Positions 2–182 (ARMYYDEDAN…GGTRGGVLET (181 aa)) constitute a KARI N-terminal Rossmann domain. Residues 25–28 (YGSQ), Ser-51, Ser-53, and 83–86 (DEVQ) each bind NADP(+). His-108 is an active-site residue. Residue Gly-134 coordinates NADP(+). The 146-residue stretch at 183–328 (TFREETETDL…KDLRAMFSWL (146 aa)) folds into the KARI C-terminal knotted domain. The Mg(2+) site is built by Asp-191, Glu-195, Glu-227, and Glu-231. Substrate is bound at residue Ser-252.

The protein belongs to the ketol-acid reductoisomerase family. Requires Mg(2+) as cofactor.

The enzyme catalyses (2R)-2,3-dihydroxy-3-methylbutanoate + NADP(+) = (2S)-2-acetolactate + NADPH + H(+). It catalyses the reaction (2R,3R)-2,3-dihydroxy-3-methylpentanoate + NADP(+) = (S)-2-ethyl-2-hydroxy-3-oxobutanoate + NADPH + H(+). It participates in amino-acid biosynthesis; L-isoleucine biosynthesis; L-isoleucine from 2-oxobutanoate: step 2/4. It functions in the pathway amino-acid biosynthesis; L-valine biosynthesis; L-valine from pyruvate: step 2/4. In terms of biological role, involved in the biosynthesis of branched-chain amino acids (BCAA). Catalyzes an alkyl-migration followed by a ketol-acid reduction of (S)-2-acetolactate (S2AL) to yield (R)-2,3-dihydroxy-isovalerate. In the isomerase reaction, S2AL is rearranged via a Mg-dependent methyl migration to produce 3-hydroxy-3-methyl-2-ketobutyrate (HMKB). In the reductase reaction, this 2-ketoacid undergoes a metal-dependent reduction by NADPH to yield (R)-2,3-dihydroxy-isovalerate. In Nostoc sp. (strain PCC 7120 / SAG 25.82 / UTEX 2576), this protein is Ketol-acid reductoisomerase (NADP(+)).